Here is a 402-residue protein sequence, read N- to C-terminus: Ferredoxin--NADP reductase (402 aa).

The region spanning 18–74 (NRLFIYEVVGLGGDGRNENSLVRKSGTTFITVPYARMNQEMQRITKLGGKIVSIRPA) is the CpcD-like domain. The tract at residues 80–101 (IVSEGQSSAQASAQSPMASSTK) is disordered. The segment covering 85 to 99 (QSSAQASAQSPMASS) has biased composition (low complexity). Residues 120-245 (KTPFLGKCIE…TGPVGKEMLL (126 aa)) enclose the FAD-binding FR-type domain. FAD contacts are provided by residues 179-182 (RLYS), 200-202 (CVR), Tyr-206, 218-220 (VCS), and Thr-260. The NADP(+) site is built by Ser-182 and Arg-202. NADP(+)-binding positions include Thr-260, 292–293 (VP), 322–323 (SR), Lys-332, 332–336 (KVYVQ), 361–362 (GL), and Glu-400.

Belongs to the ferredoxin--NADP reductase type 1 family. FAD serves as cofactor.

Its subcellular location is the cellular thylakoid membrane. It catalyses the reaction 2 reduced [2Fe-2S]-[ferredoxin] + NADP(+) + H(+) = 2 oxidized [2Fe-2S]-[ferredoxin] + NADPH. This chain is Ferredoxin--NADP reductase (petH), found in Picosynechococcus sp. (strain ATCC 27264 / PCC 7002 / PR-6) (Agmenellum quadruplicatum).